The chain runs to 604 residues: Glutamine--fructose-6-phosphate aminotransferase [isomerizing] (604 aa).

The Nucleophile; for GATase activity role is filled by cysteine 2. A Glutamine amidotransferase type-2 domain is found at 2–218; the sequence is CGIVGVVGNR…DKELVILTKD (217 aa). SIS domains lie at 284–423 and 456–594; these read IITS…ANGK and VQAL…VDKP. Lysine 599 (for Fru-6P isomerization activity) is an active-site residue.

In terms of assembly, homodimer.

It is found in the cytoplasm. The enzyme catalyses D-fructose 6-phosphate + L-glutamine = D-glucosamine 6-phosphate + L-glutamate. Functionally, catalyzes the first step in hexosamine metabolism, converting fructose-6P into glucosamine-6P using glutamine as a nitrogen source. The chain is Glutamine--fructose-6-phosphate aminotransferase [isomerizing] from Streptococcus pyogenes serotype M1.